We begin with the raw amino-acid sequence, 241 residues long: ATP synthase subunit a (241 aa).

7 helical membrane passes run 29–49 (NSSL…LLGV), 86–106 (IPLV…GMLP), 114–134 (HVIV…IVGF), 144–164 (ILLP…IKLF), 177–197 (LAAN…FIMN), 200–220 (LILT…EVFV), and 221–241 (AILQ…DAVK).

It belongs to the ATPase A chain family. In terms of assembly, F-type ATPases have 2 components, CF(1) - the catalytic core - and CF(0) - the membrane proton channel. CF(1) has five subunits: alpha(3), beta(3), gamma(1), delta(1), epsilon(1). CF(0) has three main subunits: a(1), b(2) and c(9-12). The alpha and beta chains form an alternating ring which encloses part of the gamma chain. CF(1) is attached to CF(0) by a central stalk formed by the gamma and epsilon chains, while a peripheral stalk is formed by the delta and b chains.

The protein localises to the cell membrane. In terms of biological role, key component of the proton channel; it plays a direct role in the translocation of protons across the membrane. In Wolbachia sp. subsp. Brugia malayi (strain TRS), this protein is ATP synthase subunit a.